The primary structure comprises 1140 residues: Eukaryotic translation initiation factor 3 subunit A (1140 aa).

Residues 319 to 501 (LQRMAAHVLL…NSIYFGTDLT (183 aa)) enclose the PCI domain. Composition is skewed to basic and acidic residues over residues 588-623 (QNNAREEEEARRQEEESRKAKLAEQKRLEQEQEERE) and 829-899 (AAEE…RGGD). Disordered stretches follow at residues 588–630 (QNNA…HQNE) and 829–1140 (AAEE…VKRR). Ser-908 carries the post-translational modification Phosphoserine. Composition is skewed to basic and acidic residues over residues 920–976 (ERND…EPDS), 990–1051 (SRDD…EPQR), 1059–1086 (DAPRHADRETRRPAERRDRDVRETRGDQ), and 1109–1130 (TREEKPAAKRDQAQEKENKAGD).

This sequence belongs to the eIF-3 subunit A family. In terms of assembly, component of the eukaryotic translation initiation factor 3 (eIF-3) complex. The eIF-3 complex interacts with pix.

The protein resides in the cytoplasm. In terms of biological role, RNA-binding component of the eukaryotic translation initiation factor 3 (eIF-3) complex, which is involved in protein synthesis of a specialized repertoire of mRNAs and, together with other initiation factors, stimulates binding of mRNA and methionyl-tRNAi to the 40S ribosome. The eIF-3 complex specifically targets and initiates translation of a subset of mRNAs involved in cell proliferation. In Drosophila melanogaster (Fruit fly), this protein is Eukaryotic translation initiation factor 3 subunit A.